Here is a 410-residue protein sequence, read N- to C-terminus: Venom metalloproteinase 2 (410 aa).

The signal sequence occupies residues 1–22 (MDTFILTYSILFLALFIESIHS). 6 N-linked (GlcNAc...) asparagine glycosylation sites follow: Asn64, Asn112, Asn187, Asn231, Asn292, and Asn307. Residues 214–410 (FYPKLLVLVD…NNNVSKFIWS (197 aa)) enclose the Peptidase M12B domain. His365 lines the Zn(2+) pocket. The active site involves Glu366. Positions 369 and 375 each coordinate Zn(2+). The N-linked (GlcNAc...) asparagine glycan is linked to Asn403.

The protein in the C-terminal section; belongs to the venom metalloproteinase (M12B) family. In terms of assembly, monomer. Zn(2+) serves as cofactor. As to expression, expressed by the venom gland.

The protein resides in the secreted. The gelatinase activity is inhibited by EDTA. Functionally, the recombinant protein has gelatinase activity. In vivo, injection of this recombinant into fifth instar L.oleracea (host) larvae results in partial insect mortality associated with the molt to sixth instar, with surviving insects showing retarded development and growth. In Eulophus pennicornis (Parasitoid wasp), this protein is Venom metalloproteinase 2.